The sequence spans 131 residues: Small ribosomal subunit protein uS8 (131 aa).

It belongs to the universal ribosomal protein uS8 family. In terms of assembly, part of the 30S ribosomal subunit. Contacts proteins S5 and S12.

Functionally, one of the primary rRNA binding proteins, it binds directly to 16S rRNA central domain where it helps coordinate assembly of the platform of the 30S subunit. The sequence is that of Small ribosomal subunit protein uS8 from Paraburkholderia phymatum (strain DSM 17167 / CIP 108236 / LMG 21445 / STM815) (Burkholderia phymatum).